Reading from the N-terminus, the 54-residue chain is UPF0391 membrane protein BAB1_1670 (54 aa).

The next 2 helical transmembrane spans lie at 5 to 25 and 29 to 48; these read VLVFLVVALVAGALGFGGIAG and GIAQILFFVFLALLVISLIA.

It belongs to the UPF0391 family.

The protein localises to the cell membrane. The chain is UPF0391 membrane protein BAB1_1670 from Brucella abortus (strain 2308).